The chain runs to 793 residues: PC3-like endoprotease variant A (793 aa).

The signal sequence occupies residues 1-29; it reads MNYRGIYRRRYVFVLLLLVAVVNISYGWT. Positions 30-152 are excised as a propeptide; sequence VLKNKDYKRR…QQKILERVKR (123 aa). Asn62 and Asn190 each carry an N-linked (GlcNAc...) asparagine glycan. A Peptidase S8 domain is found at 164–486; that stretch reads MWYLLNTGQA…FGRLDANAMV (323 aa). Active-site charge relay system residues include Asp202 and His242. 2 disulfides stabilise this stretch: Cys259–Cys411 and Cys351–Cys381. Ser419 functions as the Charge relay system in the catalytic mechanism. A P/Homo B domain is found at 495-638; it reads LPAQRKCTAA…EERVIDTQTK (144 aa). An intrachain disulfide couples Cys501 to Cys527.

It belongs to the peptidase S8 family. Furin subfamily. In terms of tissue distribution, predominantly in the body column.

Its function is as follows. Probably involved in the processing of hormone and other protein precursors at sites comprised of pairs of basic amino acid residues. This Hydra vulgaris (Hydra) protein is PC3-like endoprotease variant A.